The following is a 386-amino-acid chain: Bifunctional enzyme IspD/IspF (386 aa).

The 2-C-methyl-D-erythritol 4-phosphate cytidylyltransferase stretch occupies residues 1–226 (MATPSPLPSF…EDFMADLLPV (226 aa)). A 2-C-methyl-D-erythritol 2,4-cyclodiphosphate synthase region spans residues 227-386 (RVGTGFDVHK…ATVVRKDTPA (160 aa)). A divalent metal cation is bound by residues Asp233 and His235. 4-CDP-2-C-methyl-D-erythritol 2-phosphate contacts are provided by residues 233–235 (DVH) and 259–260 (HS). His267 is a binding site for a divalent metal cation. Residues 281–283 (DIG), 357–360 (TTTE), Phe364, and Arg367 each bind 4-CDP-2-C-methyl-D-erythritol 2-phosphate.

It in the N-terminal section; belongs to the IspD/TarI cytidylyltransferase family. IspD subfamily. This sequence in the C-terminal section; belongs to the IspF family. It depends on a divalent metal cation as a cofactor.

It catalyses the reaction 2-C-methyl-D-erythritol 4-phosphate + CTP + H(+) = 4-CDP-2-C-methyl-D-erythritol + diphosphate. The catalysed reaction is 4-CDP-2-C-methyl-D-erythritol 2-phosphate = 2-C-methyl-D-erythritol 2,4-cyclic diphosphate + CMP. It participates in isoprenoid biosynthesis; isopentenyl diphosphate biosynthesis via DXP pathway; isopentenyl diphosphate from 1-deoxy-D-xylulose 5-phosphate: step 2/6. It functions in the pathway isoprenoid biosynthesis; isopentenyl diphosphate biosynthesis via DXP pathway; isopentenyl diphosphate from 1-deoxy-D-xylulose 5-phosphate: step 4/6. Bifunctional enzyme that catalyzes the formation of 4-diphosphocytidyl-2-C-methyl-D-erythritol from CTP and 2-C-methyl-D-erythritol 4-phosphate (MEP) (IspD), and catalyzes the conversion of 4-diphosphocytidyl-2-C-methyl-D-erythritol 2-phosphate (CDP-ME2P) to 2-C-methyl-D-erythritol 2,4-cyclodiphosphate (ME-CPP) with a corresponding release of cytidine 5-monophosphate (CMP) (IspF). The protein is Bifunctional enzyme IspD/IspF of Erythrobacter litoralis (strain HTCC2594).